A 126-amino-acid chain; its full sequence is Prefoldin subunit beta (126 aa).

This sequence belongs to the prefoldin subunit beta family. As to quaternary structure, heterohexamer of two alpha and four beta subunits.

It localises to the cytoplasm. Its function is as follows. Molecular chaperone capable of stabilizing a range of proteins. Seems to fulfill an ATP-independent, HSP70-like function in archaeal de novo protein folding. This chain is Prefoldin subunit beta (pfdB), found in Pyrobaculum aerophilum (strain ATCC 51768 / DSM 7523 / JCM 9630 / CIP 104966 / NBRC 100827 / IM2).